The primary structure comprises 523 residues: Tubulin-specific chaperone E (523 aa).

The region spanning 31–75 (GEVSGHMGSWLGIEWDDGLRGKHNGIVDGKRYFQTQTPTGGSFIR) is the CAP-Gly domain. 7 LRR repeats span residues 155–180 (LTHL…IAQQ), 181–204 (LPSL…QITE), 209–232 (FRQL…MHTA), 235–258 (WPNI…DRTK), 260–284 (FKQL…KLGN), 285–310 (LTTL…DSQE), and 315–337 (FVSL…AFNE).

This sequence belongs to the TBCE family.

The protein localises to the cytoplasm. Tubulin-folding protein which is required for the development of the neuronal microtubule network. Essential for the development and function of neuromuscular synapses. Likely to promote microtubule formation by acting in the negative regulation of the microtubule-severing protein spas. The sequence is that of Tubulin-specific chaperone E from Drosophila melanogaster (Fruit fly).